The primary structure comprises 210 residues: CLAVATA3/ESR (CLE)-related protein 4A-3 (210 aa).

The signal sequence occupies residues 1-21 (MAKNAMLCLLILRVVLALAFA). Residues 21–83 (ATNKKGDEEP…SNQLPNNNWM (63 aa)) are required for secretion from the host cytoplasm to the host apoplasm. The N-linked (GlcNAc...) asparagine glycan is linked to asparagine 32. The disordered stretch occupies residues 116-210 (RKTGMHSQRH…APAGPDPIHH (95 aa)). Composition is skewed to basic and acidic residues over residues 125–137 (HHEETTLEQEKRV) and 144–200 (PIHH…EKRG). The stretch at 127-135 (EETTLEQEK) is one A-1 repeat. The interval 127-198 (EETTLEQEKR…HEDTTLEQEK (72 aa)) is 4 X approximate repeat A. The stretch at 136–147 (RVAGAGPDPIHH) is one CLE-1 repeat. The segment at 136–210 (RVAGAGPDPI…APAGPDPIHH (75 aa)) is 4 X approximate repeat CLE. Residues 148–156 (QDTTLEQEK) form an A-2 repeat. Residues 157–168 (RAVPAGPDPKHH) form a CLE-2 repeat. The A-3 repeat unit spans residues 169–177 (EETTLEQEK). The CLE-3 repeat unit spans residues 178 to 189 (RAVPAGPDPKHH). Residues 190–198 (EDTTLEQEK) form an A-4 repeat. Residues 199–210 (RGAPAGPDPIHH) form a CLE-4 repeat.

The protein belongs to the CLV3/ESR signal peptide family. In terms of tissue distribution, highly expressed exclusively within the dorsal esophageal gland cell during syncytium formation in host plants.

The protein localises to the secreted. The protein resides in the host cytoplasm. It localises to the host extracellular space. Its subcellular location is the extracellular space. It is found in the apoplast. In terms of biological role, mimics host plant CLE extracellular signal peptides that regulate cell fate. May play a role in the differentiation or division of feeding cells (syncytia) induced in plant roots during infection. The chain is CLAVATA3/ESR (CLE)-related protein 4A-3 (CLE-4A-3) from Globodera rostochiensis (Golden nematode worm).